The primary structure comprises 177 residues: Ribosome maturation factor RimP (177 aa).

Basic and acidic residues predominate over residues 153–171 (VEFNRKDTKNDNQTEHDNK). Residues 153-177 (VEFNRKDTKNDNQTEHDNKTEEEEA) are disordered.

It belongs to the RimP family.

Its subcellular location is the cytoplasm. In terms of biological role, required for maturation of 30S ribosomal subunits. This is Ribosome maturation factor RimP from Streptomyces coelicolor (strain ATCC BAA-471 / A3(2) / M145).